The chain runs to 856 residues: Facilitated trehalose transporter Tret1 (856 aa).

Disordered stretches follow at residues 1-29 (MSGR…LKEK) and 62-202 (DPFL…KATS). Residues 1–389 (MSGRDNRGAG…LEVYRPTTNP (389 aa)) are Cytoplasmic-facing. Residues 69-80 (VSPQRHPQTVRT) are compositionally biased toward polar residues. Basic and acidic residues predominate over residues 133 to 142 (EIREHRDRQQ). Over residues 170–180 (GNSNTNSNKAA) the composition is skewed to polar residues. 5 positions are modified to phosphoserine: S247, S248, S249, S319, and S321. Residues 326-345 (LTSRQHFQQQRSISTDSRKS) are disordered. The span at 329 to 340 (RQHFQQQRSIST) shows a compositional bias: polar residues. Residues 390-410 (IFIWTQVIAALSVSLGSLVVG) traverse the membrane as a helical segment. Residues 411 to 439 (FVSAYTSPALVSMSDPNITSFTVTKDAGS) lie on the Extracellular side of the membrane. Residue N427 is glycosylated (N-linked (GlcNAc...) asparagine). The chain crosses the membrane as a helical span at residues 440–460 (WVGGIMPLAGLVGGVAGGPLI). Over 461 to 472 (EYMGRRNTILAT) the chain is Cytoplasmic. A helical transmembrane segment spans residues 473–493 (AVPFIVSSLLIACAVNVAMVL). Residues 494 to 496 (CGR) are Extracellular-facing. Residues 497–517 (FLAGFCVGIASLSLPVYLGET) form a helical membrane-spanning segment. Over 518-527 (VQPEVRGTLG) the chain is Cytoplasmic. A helical transmembrane segment spans residues 528–548 (LLPTAFGNIGILVCFVAGSFM). The N-linked (GlcNAc...) asparagine glycan is linked to N549. At 549-551 (NWS) the chain is on the extracellular side. The chain crosses the membrane as a helical span at residues 552–572 (MLAFLGAALPVPFLILMFLIP). Residues 573-635 (ETPRWYVSRG…ELLKRNNLKP (63 aa)) are Cytoplasmic-facing. The chain crosses the membrane as a helical span at residues 636 to 656 (LSISLGLMFFQQFSGINAVIF). Residues 657–672 (YTVQIFKDAGSTIDGN) lie on the Extracellular side of the membrane. The helical transmembrane segment at 673-693 (VCTIIVGVVNFVATFIGILLI) threads the bilayer. Topologically, residues 694–699 (DRAGRK) are cytoplasmic. Residues 700–720 (ILLYASDIAMVLTLFVLGGFF) form a helical membrane-spanning segment. Over 721–739 (YCKAHGPDVSHLGWLPLTC) the chain is Extracellular. Residues 740–760 (FVVYILGFSVGFGPIPWLMMG) traverse the membrane as a helical segment. Topologically, residues 761–766 (EILPAK) are cytoplasmic. Residues 767 to 787 (IRGAAASVATSFNWTCTFVVT) traverse the membrane as a helical segment. Residues 788–800 (KTFQDLVGSLGAH) are Extracellular-facing. A helical membrane pass occupies residues 801–821 (GAFWLFGAICFVGLFFVILYV). Over 822-856 (PETQGKTLEDIERKMMGRVRRMSSVANIKPLSFNM) the chain is Cytoplasmic. S844 and S845 each carry phosphoserine.

This sequence belongs to the major facilitator superfamily. Sugar transporter (TC 2.A.1.1) family. Trehalose transporter subfamily.

The protein resides in the cell membrane. Its function is as follows. Low-capacity facilitative transporter for trehalose. Does not transport maltose, sucrose or lactose. Mediates the bidirectional transfer of trehalose. Responsible for the transport of trehalose synthesized in the fat body and the incorporation of trehalose into other tissues that require a carbon source, thereby regulating trehalose levels in the hemolymph. The chain is Facilitated trehalose transporter Tret1 from Drosophila yakuba (Fruit fly).